A 387-amino-acid chain; its full sequence is 3-ketoacyl-CoA thiolase (387 aa).

Cysteine 91 serves as the catalytic Acyl-thioester intermediate. Residues histidine 343 and cysteine 373 each act as proton acceptor in the active site.

The protein belongs to the thiolase-like superfamily. Thiolase family. As to quaternary structure, heterotetramer of two alpha chains (FadB) and two beta chains (FadA).

The protein resides in the cytoplasm. It carries out the reaction an acyl-CoA + acetyl-CoA = a 3-oxoacyl-CoA + CoA. The protein operates within lipid metabolism; fatty acid beta-oxidation. Its function is as follows. Catalyzes the final step of fatty acid oxidation in which acetyl-CoA is released and the CoA ester of a fatty acid two carbons shorter is formed. This chain is 3-ketoacyl-CoA thiolase, found in Photobacterium profundum (strain SS9).